The primary structure comprises 529 residues: CTP synthase (529 aa).

The interval 1–266 (MTKYIIVTGG…TKKIFNKLGL (266 aa)) is amidoligase domain. S13 is a CTP binding site. S13 contributes to the UTP binding site. 14–19 (SVGKGT) contributes to the ATP binding site. Y54 is an L-glutamine binding site. D71 is an ATP binding site. Mg(2+) contacts are provided by D71 and E141. CTP contacts are provided by residues 148 to 150 (DIE), 187 to 192 (KTKPLQ), and K223. Residues 187-192 (KTKPLQ) and K223 contribute to the UTP site. The region spanning 291–529 (KIALVGKYTK…FLNFLSVASA (239 aa)) is the Glutamine amidotransferase type-1 domain. An L-glutamine-binding site is contributed by G354. The Nucleophile; for glutamine hydrolysis role is filled by C381. L-glutamine is bound by residues 382 to 385 (FGMQ), E405, and R462. Residues H506 and E508 contribute to the active site.

The protein belongs to the CTP synthase family. As to quaternary structure, homotetramer.

It catalyses the reaction UTP + L-glutamine + ATP + H2O = CTP + L-glutamate + ADP + phosphate + 2 H(+). The catalysed reaction is L-glutamine + H2O = L-glutamate + NH4(+). The enzyme catalyses UTP + NH4(+) + ATP = CTP + ADP + phosphate + 2 H(+). Its pathway is pyrimidine metabolism; CTP biosynthesis via de novo pathway; CTP from UDP: step 2/2. With respect to regulation, allosterically activated by GTP, when glutamine is the substrate; GTP has no effect on the reaction when ammonia is the substrate. The allosteric effector GTP functions by stabilizing the protein conformation that binds the tetrahedral intermediate(s) formed during glutamine hydrolysis. Inhibited by the product CTP, via allosteric rather than competitive inhibition. In terms of biological role, catalyzes the ATP-dependent amination of UTP to CTP with either L-glutamine or ammonia as the source of nitrogen. Regulates intracellular CTP levels through interactions with the four ribonucleotide triphosphates. This is CTP synthase from Sulfolobus acidocaldarius (strain ATCC 33909 / DSM 639 / JCM 8929 / NBRC 15157 / NCIMB 11770).